A 112-amino-acid polypeptide reads, in one-letter code: Putative pterin-4-alpha-carbinolamine dehydratase (112 aa).

This sequence belongs to the pterin-4-alpha-carbinolamine dehydratase family.

It carries out the reaction (4aS,6R)-4a-hydroxy-L-erythro-5,6,7,8-tetrahydrobiopterin = (6R)-L-erythro-6,7-dihydrobiopterin + H2O. This chain is Putative pterin-4-alpha-carbinolamine dehydratase, found in Photobacterium profundum (strain SS9).